A 208-amino-acid chain; its full sequence is Thymidylate kinase (208 aa).

ATP is bound at residue 9-16 (GGEGCGKS).

This sequence belongs to the thymidylate kinase family.

It carries out the reaction dTMP + ATP = dTDP + ADP. Phosphorylation of dTMP to form dTDP in both de novo and salvage pathways of dTTP synthesis. This chain is Thymidylate kinase, found in Dehalococcoides mccartyi (strain ATCC BAA-2100 / JCM 16839 / KCTC 5957 / BAV1).